The chain runs to 428 residues: tRNA(Ile)-lysidine synthase (428 aa).

Serine 25–serine 30 serves as a coordination point for ATP.

This sequence belongs to the tRNA(Ile)-lysidine synthase family.

The protein resides in the cytoplasm. The catalysed reaction is cytidine(34) in tRNA(Ile2) + L-lysine + ATP = lysidine(34) in tRNA(Ile2) + AMP + diphosphate + H(+). In terms of biological role, ligates lysine onto the cytidine present at position 34 of the AUA codon-specific tRNA(Ile) that contains the anticodon CAU, in an ATP-dependent manner. Cytidine is converted to lysidine, thus changing the amino acid specificity of the tRNA from methionine to isoleucine. The sequence is that of tRNA(Ile)-lysidine synthase from Haemophilus ducreyi (strain 35000HP / ATCC 700724).